We begin with the raw amino-acid sequence, 1110 residues long: Guanylate cyclase 2D (1110 aa).

Residues 1–66 (MAGLQQGCHP…ADSLSLPAWA (66 aa)) form the signal peptide. Residues 67 to 475 (RETFTLGVLG…PNTLCIRGVQ (409 aa)) lie on the Extracellular side of the membrane. Cysteines 121 and 149 form a disulfide. Residues Asn-304 and Asn-374 are each glycosylated (N-linked (GlcNAc...) asparagine). The chain crosses the membrane as a helical span at residues 476 to 500 (PLGSLLTLTITCVLALVGGFLAYFI). At 501 to 1110 (RLGLQQLRLL…TGFAKLARVG (610 aa)) the chain is on the cytoplasmic side. The interval 529-556 (TPSRRRPHVDSGSESRSVVDGGSPQSVI) is disordered. The Protein kinase domain maps to 541–818 (SESRSVVDGG…PSLDQIYTQF (278 aa)). The interaction with NCALD stretch occupies residues 880–921 (MGTTVEPEYFDQVTIYFSDIVGFTTISALSEPIEVVGFLNDL). Positions 893–1023 (TIYFSDIVGF…DTVNTASRME (131 aa)) constitute a Guanylate cyclase domain.

It belongs to the adenylyl cyclase class-4/guanylyl cyclase family. Interacts (via the catalytic domain) with NCALD. As to expression, specifically expressed in a subpopulation of olfactory sensory neurons. Expressed in the cilia of the olfactory epithelium.

It is found in the cell projection. The protein localises to the cilium membrane. The catalysed reaction is GTP = 3',5'-cyclic GMP + diphosphate. Its activity is regulated as follows. Activated by Ca(2+). Activated by NCALD in a Ca(2+)-dependent fashion. Functions as an olfactory receptor activated by a urine odorant, uroguanylin. Activated as well by the volatile semiochemicals carbon disulfide (CS2) and carbon dioxide (CO2). Has guanylate cyclase activity upon binding of the ligand. Activation of GUCY2D neurons leads to the cGMP-dependent activation of the CNGA3 channels, membrane depolarization and an increase in action potential frequency. Signaling pathways activated by GUCY2D may trigger social behaviors such as acquisition of food preference. This is Guanylate cyclase 2D (Gucy2d) from Rattus norvegicus (Rat).